Consider the following 115-residue polypeptide: Large ribosomal subunit protein uL18 (115 aa).

The tract at residues 1–29 is disordered; the sequence is MISKPDKNKLRQKRHTRVRGKISGTSETP. Residues 10–20 are compositionally biased toward basic residues; sequence LRQKRHTRVRG.

The protein belongs to the universal ribosomal protein uL18 family. In terms of assembly, part of the 50S ribosomal subunit; part of the 5S rRNA/L5/L18/L25 subcomplex. Contacts the 5S and 23S rRNAs.

This is one of the proteins that bind and probably mediate the attachment of the 5S RNA into the large ribosomal subunit, where it forms part of the central protuberance. This Lactococcus lactis subsp. lactis (strain IL1403) (Streptococcus lactis) protein is Large ribosomal subunit protein uL18.